The following is a 409-amino-acid chain: TM2 domain-containing protein ZK858.5 (409 aa).

Residues 8-55 enclose the TM2 domain; it reads VKPWIVRIILIVGGLFGAHRLYLKQVPEAFVFFSTLGVLLIGWLYDSF. The next 6 membrane-spanning stretches (helical) occupy residues 10-30, 37-57, 104-124, 127-147, 168-190, and 209-229; these read PWIV…RLYL, FVFF…SFMF, VLYG…TFGW, INLI…IYII, MFIM…AIVS, and HFLF…LGCS.

The protein belongs to the TM2 family.

It is found in the membrane. The sequence is that of TM2 domain-containing protein ZK858.5 from Caenorhabditis elegans.